Here is a 134-residue protein sequence, read N- to C-terminus: Cytochrome b (134 aa).

3 consecutive transmembrane segments (helical) span residues 33-53 (FGSL…FLAI), 77-98 (WLLR…YLHV), and 113-133 (WNIG…GYVL). The heme b site is built by H83 and H97.

It belongs to the cytochrome b family. The cytochrome bc1 complex contains 11 subunits: 3 respiratory subunits (MT-CYB, CYC1 and UQCRFS1), 2 core proteins (UQCRC1 and UQCRC2) and 6 low-molecular weight proteins (UQCRH/QCR6, UQCRB/QCR7, UQCRQ/QCR8, UQCR10/QCR9, UQCR11/QCR10 and a cleavage product of UQCRFS1). This cytochrome bc1 complex then forms a dimer. Heme b is required as a cofactor.

The protein resides in the mitochondrion inner membrane. In terms of biological role, component of the ubiquinol-cytochrome c reductase complex (complex III or cytochrome b-c1 complex) that is part of the mitochondrial respiratory chain. The b-c1 complex mediates electron transfer from ubiquinol to cytochrome c. Contributes to the generation of a proton gradient across the mitochondrial membrane that is then used for ATP synthesis. The polypeptide is Cytochrome b (MT-CYB) (Platyrrhinus helleri (Heller's broad-nosed bat)).